The chain runs to 891 residues: 26S proteasome non-ATPase regulatory subunit 2 homolog A (891 aa).

Positions 1 to 44 are disordered; sequence MAPTQDPNSVGGGAKKDEATLKVPSKDPKKKDEKKDEDLSEEDL. A Nuclear localization signal motif is present at residues 14–21; sequence AKKDEATL. Basic and acidic residues predominate over residues 14-37; the sequence is AKKDEATLKVPSKDPKKKDEKKDE. Residue K218 forms a Glycyl lysine isopeptide (Lys-Gly) (interchain with G-Cter in ubiquitin) linkage. O-acetylthreonine is present on T219. PC repeat units follow at residues 414–447, 448–484, 485–519, 522–556, 565–594, 674–705, and 724–739; these read SAAA…PIIA, GALL…SVRI, GAIM…PLDV, FASL…AELG, LGLG…KIRK, LALG…EVAM, and AGML…KDMS.

Belongs to the proteasome subunit S2 family. In terms of assembly, component of the 19S regulatory particle (RP/PA700) base subcomplex of the 26S proteasome. The 26S proteasome is composed of a core protease (CP), known as the 20S proteasome, capped at one or both ends by the 19S regulatory particle (RP/PA700). The RP/PA700 complex is composed of at least 17 different subunits in two subcomplexes, the base and the lid, which form the portions proximal and distal to the 20S proteolytic core, respectively. Interacts with JMJ27. In terms of tissue distribution, expressed in stems, leaves, buds, flowers, siliques and developing seeds.

The protein resides in the nucleus. The protein localises to the cytoplasm. Functionally, acts as a regulatory subunit of the 26 proteasome which is involved in the ATP-dependent degradation of ubiquitinated proteins. Required during embryogenesis. Required for optimal plant growth and stress responses. Required for innate immunity. Prevents JMJ27 accumulation in non-drought conditions. The sequence is that of 26S proteasome non-ATPase regulatory subunit 2 homolog A from Arabidopsis thaliana (Mouse-ear cress).